A 214-amino-acid polypeptide reads, in one-letter code: MMNQMGMHMQQPGVVPGGPGGPVGMAGGPVGGVGVSPVMMQSPQMQQQQQVAAQQQQQQQQQQQAQAHQQQSQQTEKVDNISKVKGLVGPLRDSLSTTVKTAAQLLQQNNLNDAGTKGGDMSTTTPRFDKHLEEFYSICDQIELNLKTAKLCMQQGASSQQYLPIPVAPTQPNPAETNALSYSQYLDVVKIQIGYAKDIHDTLICAAQNICPSE.

The disordered stretch occupies residues 1–78 (MMNQMGMHMQ…QQQSQQTEKV (78 aa)). Positions 15-34 (VPGGPGGPVGMAGGPVGGVG) are enriched in gly residues. Positions 44–74 (QMQQQQQVAAQQQQQQQQQQQAQAHQQQSQQ) are enriched in low complexity.

This sequence belongs to the Mediator complex subunit 29 family. In terms of assembly, component of the Mediator complex.

It is found in the nucleus. In terms of biological role, component of the Mediator complex, a coactivator involved in the regulated transcription of nearly all RNA polymerase II-dependent genes. Mediator functions as a bridge to convey information from gene-specific regulatory proteins to the basal RNA polymerase II transcription machinery. Mediator is recruited to promoters by direct interactions with regulatory proteins and serves as a scaffold for the assembly of a functional preinitiation complex with RNA polymerase II and the general transcription factors. This chain is Mediator of RNA polymerase II transcription subunit 29 (ix), found in Aedes aegypti (Yellowfever mosquito).